We begin with the raw amino-acid sequence, 532 residues long: Probable cyclic di-GMP phosphodiesterase PdeD (532 aa).

2 consecutive transmembrane segments (helical) span residues 16 to 36 (MIVC…VRFI) and 245 to 265 (LPLA…ATAY). In terms of domain architecture, EAL spans 266 to 515 (RMSFSREINL…DFPKWLAGSQ (250 aa)).

It is found in the cell membrane. It carries out the reaction 3',3'-c-di-GMP + H2O = 5'-phosphoguanylyl(3'-&gt;5')guanosine + H(+). Functionally, phosphodiesterase (PDE) that catalyzes the hydrolysis of cyclic-di-GMP (c-di-GMP) to 5'-pGpG. May serve as a negative regulator of cellulose synthesis (as has been suggested for S.typhimurium); overexpression inhibits cell aggregation in strains able to produce adhesive curli fimbriae. Cyclic-di-GMP is a second messenger which controls cell surface-associated traits in bacteria. This Escherichia coli (strain K12) protein is Probable cyclic di-GMP phosphodiesterase PdeD.